The sequence spans 472 residues: Mixed lineage kinase domain-like protein (472 aa).

Positions 1-143 are N-terminal bundle and brace (NBB); mediates INSP6 binding; the sequence is MDKLGQIIKL…QEDRQDAEED (143 aa). The stretch at 61-81 forms a coiled coil; it reads LGRFDEVLKEANQQIEKFSKK. S124 is subject to Phosphoserine. Positions 138 to 229 form a coiled coil; it reads QDAEEDGNEN…VFNNPQAESV (92 aa). The region spanning 192–456 is the Protein kinase domain; it reads GPPWTKLKTS…DGRSLSGRER (265 aa). Residues 198–206 and K219 contribute to the ATP site; that span reads LKTSKMSTI. 2 positions are modified to phosphoserine; by RIPK3: S345 and S347. T349 carries the phosphothreonine; by RIPK3 modification. Residue S352 is modified to Phosphoserine; by RIPK3.

This sequence belongs to the protein kinase superfamily. In terms of assembly, homooligomer. Homotrimer; forms homotrimers on necroptosis induction. Upon TNF-induced necrosis, forms in complex with PGAM5, RIPK1 and RIPK3. Within this complex, may play a role in the proper targeting of RIPK1-RIPK3 to its downstream effector PGAM5. Interacts with RIPK3; the interaction is direct and promotes its phosphorylation and subsequent activation. Post-translationally, phosphorylation by RIPK3 induces a conformational switch that is required for necroptosis. It also induces homotrimerization and localization to the plasma membrane. Highly expressed in thymus, colon, intestine, liver, spleen and lung. Expressed at much lower level in skeletal muscle, heart and kidney. Not detected in brain.

The protein localises to the cytoplasm. Its subcellular location is the cell membrane. It localises to the nucleus. With respect to regulation, activated via binding to highly phosphorylated inositol phosphates such as inositolhexakisphosphate (InsP6) which mediates the release of an N-terminal auto-inhibitory region. Activation requires not only RIPK3-dependent phosphorylation but also binding to highly phosphorylated inositol phosphates. In terms of biological role, pseudokinase that plays a key role in TNF-induced necroptosis, a programmed cell death process. Does not have protein kinase activity. Activated following phosphorylation by RIPK3, leading to homotrimerization, localization to the plasma membrane and execution of programmed necrosis characterized by calcium influx and plasma membrane damage. In addition to TNF-induced necroptosis, necroptosis can also take place in the nucleus in response to orthomyxoviruses infection: following ZBP1 activation, which senses double-stranded Z-RNA structures, nuclear RIPK3 catalyzes phosphorylation and activation of MLKL, promoting disruption of the nuclear envelope and leakage of cellular DNA into the cytosol. Binds to highly phosphorylated inositol phosphates such as inositolhexakisphosphate (InsP6) which is essential for its necroptotic function. The chain is Mixed lineage kinase domain-like protein from Mus musculus (Mouse).